The primary structure comprises 334 residues: Thioredoxin reductase (334 aa).

FAD contacts are provided by residues 11-14 (SGAG), 40-41 (TA), Gln45, Asn54, Cys148, Asp294, and 301-303 (RQA). Cys145 and Cys148 are joined by a disulfide.

It belongs to the class-II pyridine nucleotide-disulfide oxidoreductase family. As to quaternary structure, homodimer. FAD is required as a cofactor.

It carries out the reaction [thioredoxin]-dithiol + NADP(+) = [thioredoxin]-disulfide + NADPH + H(+). Functionally, component of the thioredoxin-thioredoxin reductase system which may be involved in biosynthesis of penicillins and cephalosporins and may be important in determining the thiol-disulfide redox balance. The sequence is that of Thioredoxin reductase (TRR1) from Penicillium chrysogenum (Penicillium notatum).